Here is a 410-residue protein sequence, read N- to C-terminus: Phospho-N-acetylmuramoyl-pentapeptide-transferase (410 aa).

Helical transmembrane passes span 27–47, 77–97, 99–119, 140–160, 213–233, 248–268, 288–308, 312–332, 337–357, and 389–409; these read RMILAAITSLLLSIFLGPYFI, TPTMGGILILSSMLVSLVLWM, LTHIFTLILFVTTVFLGLIGG, LFFQFVLSAAIASYFLLSSVN, PVVTFGGISLILMAFFIFFVI, GLLAGCLVTAAGSLCLIAFVS, IAIYLCALIGASLGFLWYNGY, VFMGDTGSLTLGGILGVSAVL, FLLGIVGGIFVAEALSVILQV, and VIRFWIMSLLFAIIGIASLKF.

This sequence belongs to the glycosyltransferase 4 family. MraY subfamily. Mg(2+) serves as cofactor.

The protein resides in the cell inner membrane. It catalyses the reaction UDP-N-acetyl-alpha-D-muramoyl-L-alanyl-gamma-D-glutamyl-meso-2,6-diaminopimeloyl-D-alanyl-D-alanine + di-trans,octa-cis-undecaprenyl phosphate = di-trans,octa-cis-undecaprenyl diphospho-N-acetyl-alpha-D-muramoyl-L-alanyl-D-glutamyl-meso-2,6-diaminopimeloyl-D-alanyl-D-alanine + UMP. It functions in the pathway cell wall biogenesis; peptidoglycan biosynthesis. Catalyzes the initial step of the lipid cycle reactions in the biosynthesis of the cell wall peptidoglycan: transfers peptidoglycan precursor phospho-MurNAc-pentapeptide from UDP-MurNAc-pentapeptide onto the lipid carrier undecaprenyl phosphate, yielding undecaprenyl-pyrophosphoryl-MurNAc-pentapeptide, known as lipid I. The protein is Phospho-N-acetylmuramoyl-pentapeptide-transferase of Protochlamydia amoebophila (strain UWE25).